The chain runs to 132 residues: Small ribosomal subunit protein uS11 (132 aa).

The disordered stretch occupies residues 110-132 (IEDVTPVPSDSTRRKGGRRGRRL). Residues 123-132 (RKGGRRGRRL) are compositionally biased toward basic residues.

This sequence belongs to the universal ribosomal protein uS11 family. As to quaternary structure, component of the small ribosomal subunit. Mature ribosomes consist of a small (40S) and a large (60S) subunit. The 40S subunit contains about 32 different proteins and 1 molecule of RNA (18S). The 60S subunit contains 45 different proteins and 3 molecules of RNA (25S, 5.8S and 5S).

The protein localises to the cytoplasm. In terms of biological role, component of the ribosome, a large ribonucleoprotein complex responsible for the synthesis of proteins in the cell. The small ribosomal subunit (SSU) binds messenger RNAs (mRNAs) and translates the encoded message by selecting cognate aminoacyl-transfer RNA (tRNA) molecules. The large subunit (LSU) contains the ribosomal catalytic site termed the peptidyl transferase center (PTC), which catalyzes the formation of peptide bonds, thereby polymerizing the amino acids delivered by tRNAs into a polypeptide chain. The nascent polypeptides leave the ribosome through a tunnel in the LSU and interact with protein factors that function in enzymatic processing, targeting, and the membrane insertion of nascent chains at the exit of the ribosomal tunnel. RPS14B is involved in nucleolar processing of pre-18S ribosomal RNA and ribosome assembly. The sequence is that of Small ribosomal subunit protein uS11 (RPS14B) from Candida albicans (strain SC5314 / ATCC MYA-2876) (Yeast).